The primary structure comprises 424 residues: Hemagglutinin-esterase (424 aa).

Residues Met-1–Ser-16 form the signal peptide. Residues Phe-7–Gly-127 form an esterase domain 1 region. Residues Leu-17–Ile-392 are Virion surface-facing. Ser-40 serves as the catalytic Nucleophile. A disulfide bond links Cys-44 and Cys-65. Residues Asn-54, Asn-89, Asn-153, Asn-236, and Asn-301 are each glycosylated (N-linked (GlcNAc...) asparagine; by host). Disulfide bonds link Cys-113-Cys-162, Cys-197-Cys-276, and Cys-205-Cys-249. Residues Leu-128–Leu-266 are receptor binding. Positions Leu-267–Thr-379 are esterase domain 2. A disulfide bond links Cys-307 and Cys-312. Asn-316 carries N-linked (GlcNAc...) asparagine; by host glycosylation. Catalysis depends on charge relay system residues Asp-326 and His-329. Cys-347 and Cys-371 are oxidised to a cystine. Asn-358 is a glycosylation site (N-linked (GlcNAc...) asparagine; by host). The helical transmembrane segment at Ile-393–Phe-413 threads the bilayer. Over Met-414 to Ala-424 the chain is Intravirion. Residue Asn-417 is glycosylated (N-linked (GlcNAc...) asparagine; by host).

Belongs to the influenza type C/coronaviruses hemagglutinin-esterase family. As to quaternary structure, homodimer; disulfide-linked. Forms a complex with the M protein in the pre-Golgi. Associates then with S-M complex to form a ternary complex S-M-HE. In terms of processing, N-glycosylated in the host RER.

Its subcellular location is the virion membrane. The protein localises to the host cell membrane. The catalysed reaction is N-acetyl-9-O-acetylneuraminate + H2O = N-acetylneuraminate + acetate + H(+). The enzyme catalyses N-acetyl-4-O-acetylneuraminate + H2O = N-acetylneuraminate + acetate + H(+). In terms of biological role, structural protein that makes short spikes at the surface of the virus. Contains receptor binding and receptor-destroying activities. Mediates de-O-acetylation of N-acetyl-4-O-acetylneuraminic acid, which is probably the receptor determinant recognized by the virus on the surface of erythrocytes and susceptible cells. This receptor-destroying activity is important for virus release as it probably helps preventing self-aggregation and ensures the efficient spread of the progeny virus from cell to cell. May serve as a secondary viral attachment protein for initiating infection, the spike protein being the major one. May become a target for both the humoral and the cellular branches of the immune system. The polypeptide is Hemagglutinin-esterase (Bos taurus (Bovine)).